The chain runs to 263 residues: uncharacterized protein (263 aa).

This sequence belongs to the A.longa ORF167/ORF288 family.

It localises to the plastid. This is an uncharacterized protein from Euglena longa (Euglenophycean alga).